The primary structure comprises 562 residues: Serine/threonine-protein kinase dst3 (562 aa).

Residues 23–285 (FQIVEVVGSG…AQQLLSHPFI (263 aa)) enclose the Protein kinase domain. ATP contacts are provided by residues 29–37 (VGSGSFGTV) and lysine 59. The active-site Proton acceptor is aspartate 154. Disordered regions lie at residues 316–339 (LEEQEQQRNSSGSKMVSSVPTRAS) and 366–562 (SIMR…NVNI). The segment covering 322–339 (QRNSSGSKMVSSVPTRAS) has biased composition (polar residues). Low complexity-rich tracts occupy residues 421 to 431 (NNNNNNNNTTT), 442 to 454 (QQQQQQQQQNNNK), and 476 to 494 (TTPTTPTTTQPNTSTTTKT). Polar residues predominate over residues 495-522 (GSSLNIKPTNNVNRSTISIGQQKSPLQS). A compositionally biased stretch (acidic residues) spans 542–562 (EDEEDEEEFNHEDYEEINVNI).

The protein belongs to the protein kinase superfamily. STE Ser/Thr protein kinase family. STE20 subfamily. Mg(2+) is required as a cofactor.

The catalysed reaction is L-seryl-[protein] + ATP = O-phospho-L-seryl-[protein] + ADP + H(+). It carries out the reaction L-threonyl-[protein] + ATP = O-phospho-L-threonyl-[protein] + ADP + H(+). The sequence is that of Serine/threonine-protein kinase dst3 from Dictyostelium discoideum (Social amoeba).